A 120-amino-acid polypeptide reads, in one-letter code: Large ribosomal subunit protein uL22 (120 aa).

It belongs to the universal ribosomal protein uL22 family. As to quaternary structure, part of the 50S ribosomal subunit.

In terms of biological role, this protein binds specifically to 23S rRNA; its binding is stimulated by other ribosomal proteins, e.g. L4, L17, and L20. It is important during the early stages of 50S assembly. It makes multiple contacts with different domains of the 23S rRNA in the assembled 50S subunit and ribosome. The globular domain of the protein is located near the polypeptide exit tunnel on the outside of the subunit, while an extended beta-hairpin is found that lines the wall of the exit tunnel in the center of the 70S ribosome. The polypeptide is Large ribosomal subunit protein uL22 (Oenococcus oeni (strain ATCC BAA-331 / PSU-1)).